We begin with the raw amino-acid sequence, 235 residues long: 2-C-methyl-D-erythritol 4-phosphate cytidylyltransferase (235 aa).

Belongs to the IspD/TarI cytidylyltransferase family. IspD subfamily.

The catalysed reaction is 2-C-methyl-D-erythritol 4-phosphate + CTP + H(+) = 4-CDP-2-C-methyl-D-erythritol + diphosphate. The protein operates within isoprenoid biosynthesis; isopentenyl diphosphate biosynthesis via DXP pathway; isopentenyl diphosphate from 1-deoxy-D-xylulose 5-phosphate: step 2/6. In terms of biological role, catalyzes the formation of 4-diphosphocytidyl-2-C-methyl-D-erythritol from CTP and 2-C-methyl-D-erythritol 4-phosphate (MEP). This chain is 2-C-methyl-D-erythritol 4-phosphate cytidylyltransferase, found in Mycolicibacterium paratuberculosis (strain ATCC BAA-968 / K-10) (Mycobacterium paratuberculosis).